A 625-amino-acid polypeptide reads, in one-letter code: Glucose dehydrogenase [FAD, quinone] (625 aa).

Residues 1 to 42 (MATSPSSCDCLVGVPTGPTLASTCGGSAFMLFMGLLEVFIRS) form the signal peptide. FAD is bound at residue 66–95 (DFIVIGGGSAGSVVASRLSEVPQWKVLLIE). The Proton acceptor role is filled by His544. Position 613 (Sec613) is a non-standard amino acid, selenocysteine.

Belongs to the GMC oxidoreductase family. The cofactor is FAD.

It localises to the secreted. The catalysed reaction is a quinone + D-glucose = D-glucono-1,5-lactone + a quinol. The chain is Glucose dehydrogenase [FAD, quinone] (Gld) from Drosophila pseudoobscura pseudoobscura (Fruit fly).